A 258-amino-acid polypeptide reads, in one-letter code: 5'-nucleotidase SurE (258 aa).

4 residues coordinate a divalent metal cation: Asp-10, Asp-11, Ser-41, and Asn-96.

The protein belongs to the SurE nucleotidase family. Requires a divalent metal cation as cofactor.

It localises to the cytoplasm. The catalysed reaction is a ribonucleoside 5'-phosphate + H2O = a ribonucleoside + phosphate. In terms of biological role, nucleotidase that shows phosphatase activity on nucleoside 5'-monophosphates. The polypeptide is 5'-nucleotidase SurE (Sorangium cellulosum (strain So ce56) (Polyangium cellulosum (strain So ce56))).